The following is a 622-amino-acid chain: Telomerase-associated protein of 75 kDa (622 aa).

Component of the telomerase holoenzyme complex, composed of the catalytic core (the catalytic subunit TERT, the telomerase RNA template component TER and TAP65/p65), which is associated with two heterotrimeric subcomplexes: (i) the replication protein A (RPA)-related subcomplex, composed of TEB1, RPA2/TEB2 and RPA3/TEB3 and (ii) the CST-like subcomplex, composed of TAP75/p75, TAP45/p45 and TAP19/p19. TEB1 and the CST-like subcomplex are tethered to the catalytic core by TAP50/p50.

It is found in the chromosome. The protein resides in the telomere. In terms of biological role, component of a CST-like subcomplex of the holoenzyme telomerase ribonucleoprotein complex, which stimulates telomerase complementary-strand synthesis. Telomerase is an essential ribonucleoprotein enzyme that copies new telomeric repeats onto chromosome ends by repetitively synthesizing the short telomere-repeat sequence 5'-TTGGGG-3' using an RNA template component TER. The CST-like subcomplex (also named 7-4-1) binds telomeric single-stranded DNA and coordinates telomere G-strand and C-strand synthesis. The chain is Telomerase-associated protein of 75 kDa from Tetrahymena thermophila (strain SB210).